A 145-amino-acid chain; its full sequence is LIM domain only protein 3 (145 aa).

2 LIM zinc-binding domains span residues 11-73 (KGCA…LFGT) and 75-137 (GNCA…GLMK).

The sequence is that of LIM domain only protein 3 (Lmo3) from Rattus norvegicus (Rat).